The sequence spans 354 residues: S-adenosylmethionine:tRNA ribosyltransferase-isomerase (354 aa).

It belongs to the QueA family. In terms of assembly, monomer.

It localises to the cytoplasm. It carries out the reaction 7-aminomethyl-7-carbaguanosine(34) in tRNA + S-adenosyl-L-methionine = epoxyqueuosine(34) in tRNA + adenine + L-methionine + 2 H(+). The protein operates within tRNA modification; tRNA-queuosine biosynthesis. In terms of biological role, transfers and isomerizes the ribose moiety from AdoMet to the 7-aminomethyl group of 7-deazaguanine (preQ1-tRNA) to give epoxyqueuosine (oQ-tRNA). In Methylobacterium radiotolerans (strain ATCC 27329 / DSM 1819 / JCM 2831 / NBRC 15690 / NCIMB 10815 / 0-1), this protein is S-adenosylmethionine:tRNA ribosyltransferase-isomerase.